Consider the following 404-residue polypeptide: Acetylornithine/succinyldiaminopimelate aminotransferase (404 aa).

Pyridoxal 5'-phosphate is bound by residues 108 to 109 (GA) and phenylalanine 141. Arginine 144 serves as a coordination point for N(2)-acetyl-L-ornithine. 226-229 (DEIQ) serves as a coordination point for pyridoxal 5'-phosphate. Lysine 255 carries the N6-(pyridoxal phosphate)lysine modification. Threonine 283 lines the N(2)-acetyl-L-ornithine pocket. Residue threonine 284 participates in pyridoxal 5'-phosphate binding.

It belongs to the class-III pyridoxal-phosphate-dependent aminotransferase family. ArgD subfamily. As to quaternary structure, homodimer. Pyridoxal 5'-phosphate is required as a cofactor.

Its subcellular location is the cytoplasm. The catalysed reaction is N(2)-acetyl-L-ornithine + 2-oxoglutarate = N-acetyl-L-glutamate 5-semialdehyde + L-glutamate. It carries out the reaction N-succinyl-(2S,6S)-2,6-diaminopimelate + 2-oxoglutarate = (S)-2-succinylamino-6-oxoheptanedioate + L-glutamate. It functions in the pathway amino-acid biosynthesis; L-arginine biosynthesis; N(2)-acetyl-L-ornithine from L-glutamate: step 4/4. The protein operates within amino-acid biosynthesis; L-lysine biosynthesis via DAP pathway; LL-2,6-diaminopimelate from (S)-tetrahydrodipicolinate (succinylase route): step 2/3. Its function is as follows. Involved in both the arginine and lysine biosynthetic pathways. In Buchnera aphidicola subsp. Schizaphis graminum (strain Sg), this protein is Acetylornithine/succinyldiaminopimelate aminotransferase.